The chain runs to 127 residues: Small ribosomal subunit protein uS13 (127 aa).

A disordered region spans residues 96–127; the sequence is LPCHGQRTSTNARTRKGPKRTAVKKKGAAKKK. Residues 108–127 show a composition bias toward basic residues; that stretch reads RTRKGPKRTAVKKKGAAKKK.

This sequence belongs to the universal ribosomal protein uS13 family. As to quaternary structure, part of the 30S ribosomal subunit. Forms a loose heterodimer with protein S19. Forms two bridges to the 50S subunit in the 70S ribosome.

In terms of biological role, located at the top of the head of the 30S subunit, it contacts several helices of the 16S rRNA. In the 70S ribosome it contacts the 23S rRNA (bridge B1a) and protein L5 of the 50S subunit (bridge B1b), connecting the 2 subunits; these bridges are implicated in subunit movement. Contacts the tRNAs in the A and P-sites. The polypeptide is Small ribosomal subunit protein uS13 (Desulfosudis oleivorans (strain DSM 6200 / JCM 39069 / Hxd3) (Desulfococcus oleovorans)).